The primary structure comprises 232 residues: Sugar fermentation stimulation protein homolog (232 aa).

It belongs to the SfsA family.

The chain is Sugar fermentation stimulation protein homolog from Alkaliphilus metalliredigens (strain QYMF).